We begin with the raw amino-acid sequence, 150 residues long: Protein-export protein SecB (150 aa).

Belongs to the SecB family. In terms of assembly, homotetramer, a dimer of dimers. One homotetramer interacts with 1 SecA dimer.

The protein localises to the cytoplasm. Its function is as follows. One of the proteins required for the normal export of preproteins out of the cell cytoplasm. It is a molecular chaperone that binds to a subset of precursor proteins, maintaining them in a translocation-competent state. It also specifically binds to its receptor SecA. This chain is Protein-export protein SecB, found in Chromobacterium violaceum (strain ATCC 12472 / DSM 30191 / JCM 1249 / CCUG 213 / NBRC 12614 / NCIMB 9131 / NCTC 9757 / MK).